The chain runs to 397 residues: Tryptophan synthase beta chain 1 (397 aa).

Position 90 is an N6-(pyridoxal phosphate)lysine (Lys-90).

Belongs to the TrpB family. In terms of assembly, tetramer of two alpha and two beta chains. Pyridoxal 5'-phosphate serves as cofactor.

The enzyme catalyses (1S,2R)-1-C-(indol-3-yl)glycerol 3-phosphate + L-serine = D-glyceraldehyde 3-phosphate + L-tryptophan + H2O. Its pathway is amino-acid biosynthesis; L-tryptophan biosynthesis; L-tryptophan from chorismate: step 5/5. Functionally, the beta subunit is responsible for the synthesis of L-tryptophan from indole and L-serine. The polypeptide is Tryptophan synthase beta chain 1 (trpB1) (Aquifex aeolicus (strain VF5)).